The chain runs to 57 residues: MTPLRPTRPCPECGKPSTREAYPFCSPRCKNIDLNRWLSGSYVIAGKPLGEEDENDS.

Positions 10, 13, 25, and 29 each coordinate Zn(2+).

The protein belongs to the DNA gyrase inhibitor YacG family. In terms of assembly, interacts with GyrB. It depends on Zn(2+) as a cofactor.

Functionally, inhibits all the catalytic activities of DNA gyrase by preventing its interaction with DNA. Acts by binding directly to the C-terminal domain of GyrB, which probably disrupts DNA binding by the gyrase. This is DNA gyrase inhibitor YacG from Brucella melitensis biotype 1 (strain ATCC 23456 / CCUG 17765 / NCTC 10094 / 16M).